The following is a 395-amino-acid chain: MANDYLFTSESVSEGHPDKVADQISDAILDAILEQDKYSRVAAETLCNTGLVVLAGEITTTANIDYIQIARDTIKRIGYDNTDYGIDYKGCAVLVAYDKQSPDIAQGVDRAHDDNLDQGAGDQGLMFGYACDETPELMPLPIYLSHRLVERQASLRRDGRLPWLRPDAKSQVTVRYVDGRPDSIDTVVLSTQHAPDIELPALREAVIEEIIKPTLPADLIKGDIKFLVNPTGRFVIGGPQGDCGLTGRKIIVDTYGGAAPHGGGAFSGKDPSKVDRSAAYAGRYVAKNIVAAGLASRALIQVSYAIGVAEPTSVMVNTFGTGRVSDAVITKLVREHFDLRPKGIIKMLDLLRPIYEKTAAYGHFGREEPEFSWEATDKALVLAEAAGVEPTARVA.

His16 contributes to the ATP binding site. Mg(2+) is bound at residue Asp18. Glu44 lines the K(+) pocket. The L-methionine site is built by Glu57 and Gln100. Positions 100-110 (QSPDIAQGVDR) are flexible loop. Residues 167–169 (DAK), 233–234 (RF), Asp242, 248–249 (RK), Ala265, and Lys269 contribute to the ATP site. Asp242 serves as a coordination point for L-methionine. Residue Lys273 participates in L-methionine binding.

This sequence belongs to the AdoMet synthase family. In terms of assembly, homotetramer; dimer of dimers. Requires Mg(2+) as cofactor. K(+) is required as a cofactor.

The protein resides in the cytoplasm. It carries out the reaction L-methionine + ATP + H2O = S-adenosyl-L-methionine + phosphate + diphosphate. The protein operates within amino-acid biosynthesis; S-adenosyl-L-methionine biosynthesis; S-adenosyl-L-methionine from L-methionine: step 1/1. Its function is as follows. Catalyzes the formation of S-adenosylmethionine (AdoMet) from methionine and ATP. The overall synthetic reaction is composed of two sequential steps, AdoMet formation and the subsequent tripolyphosphate hydrolysis which occurs prior to release of AdoMet from the enzyme. The polypeptide is S-adenosylmethionine synthase (Burkholderia ambifaria (strain MC40-6)).